Reading from the N-terminus, the 150-residue chain is Macrodomain Ter protein (150 aa).

It belongs to the MatP family. As to quaternary structure, homodimer.

Its subcellular location is the cytoplasm. In terms of biological role, required for spatial organization of the terminus region of the chromosome (Ter macrodomain) during the cell cycle. Prevents early segregation of duplicated Ter macrodomains during cell division. Binds specifically to matS, which is a 13 bp signature motif repeated within the Ter macrodomain. This Citrobacter koseri (strain ATCC BAA-895 / CDC 4225-83 / SGSC4696) protein is Macrodomain Ter protein.